A 137-amino-acid chain; its full sequence is Small ribosomal subunit protein uS12 (137 aa).

2 disordered regions span residues 1-22 (MPTI…SKSP) and 35-57 (ATNN…TPKK). A compositionally biased stretch (basic residues) spans 9-18 (RKPRKSKVSK). Asp102 bears the 3-methylthioaspartic acid mark.

This sequence belongs to the universal ribosomal protein uS12 family. As to quaternary structure, part of the 30S ribosomal subunit. Contacts proteins S8 and S17. May interact with IF1 in the 30S initiation complex.

With S4 and S5 plays an important role in translational accuracy. Functionally, interacts with and stabilizes bases of the 16S rRNA that are involved in tRNA selection in the A site and with the mRNA backbone. Located at the interface of the 30S and 50S subunits, it traverses the body of the 30S subunit contacting proteins on the other side and probably holding the rRNA structure together. The combined cluster of proteins S8, S12 and S17 appears to hold together the shoulder and platform of the 30S subunit. The polypeptide is Small ribosomal subunit protein uS12 (Leuconostoc mesenteroides subsp. mesenteroides (strain ATCC 8293 / DSM 20343 / BCRC 11652 / CCM 1803 / JCM 6124 / NCDO 523 / NBRC 100496 / NCIMB 8023 / NCTC 12954 / NRRL B-1118 / 37Y)).